Reading from the N-terminus, the 240-residue chain is Eukaryotic translation initiation factor 3 subunit K (240 aa).

The region spanning 41-221 (YDKDIVLTIL…TIKTRNIDEK (181 aa)) is the PCI domain.

The protein belongs to the eIF-3 subunit K family. As to quaternary structure, component of the eukaryotic translation initiation factor 3 (eIF-3) complex.

It localises to the cytoplasm. Component of the eukaryotic translation initiation factor 3 (eIF-3) complex, which is involved in protein synthesis of a specialized repertoire of mRNAs and, together with other initiation factors, stimulates binding of mRNA and methionyl-tRNAi to the 40S ribosome. The eIF-3 complex specifically targets and initiates translation of a subset of mRNAs involved in cell proliferation. This chain is Eukaryotic translation initiation factor 3 subunit K, found in Caenorhabditis briggsae.